The primary structure comprises 1754 residues: Probable outer membrane protein PmpB (1754 aa).

Positions 1–14 (MSSMKWLSATAVFA) are cleaved as a signal peptide. Composition is skewed to low complexity over residues 68 to 105 (NIPT…TPDP) and 212 to 232 (SETS…PSSS). Disordered regions lie at residues 68–109 (NIPT…KGGG), 190–235 (SSNS…SRAE), 252–271 (PAAQ…GSGG), 397–438 (NADA…ATAK), 621–668 (AAEN…STPS), and 1299–1332 (TSSA…ATTP). Polar residues-rich tracts occupy residues 252–264 (PAAQ…STPS) and 402–412 (ASSSPQSGSGA). Low complexity-rich tracts occupy residues 413–427 (TTVS…GSDS), 636–668 (PTAD…STPS), 1299–1311 (TSSA…VSSS), and 1320–1332 (SAAA…ATTP). Positions 1461–1754 (DDIAYNNFWV…MTSCGARMIF (294 aa)) constitute an Autotransporter domain.

This sequence belongs to the PMP outer membrane protein family.

It is found in the secreted. The protein resides in the cell wall. Its subcellular location is the cell outer membrane. This is Probable outer membrane protein PmpB (pmpB) from Chlamydia trachomatis serovar D (strain ATCC VR-885 / DSM 19411 / UW-3/Cx).